The chain runs to 332 residues: Melanocortin receptor 4 (332 aa).

Residues Met1 to Gln43 lie on the Extracellular side of the membrane. N-linked (GlcNAc...) asparagine glycans are attached at residues Asn2, Asn17, and Asn26. Intrachain disulfides connect Cys40/Cys279 and Cys271/Cys277. Residues Leu44–Ile69 form a helical membrane-spanning segment. Residues Ala70–Phe81 lie on the Cytoplasmic side of the membrane. A helical transmembrane segment spans residues Phe82–Leu106. Residues Glu100, Asp122, and Asp126 each coordinate Ca(2+). Residues Leu107–Asn123 lie on the Extracellular side of the membrane. Residues Val124 to Val145 traverse the membrane as a helical segment. At Asp146 to Arg165 the chain is on the cytoplasmic side. The helical transmembrane segment at Val166–Ile186 threads the bilayer. The Extracellular portion of the chain corresponds to Tyr187–Ser191. A helical transmembrane segment spans residues Ala192 to Met215. Topologically, residues Phe216–Thr248 are cytoplasmic. The chain crosses the membrane as a helical span at residues Ile249–Cys271. The Extracellular portion of the chain corresponds to Pro272–Phe280. Residues Met281–Leu304 traverse the membrane as a helical segment. Residues Arg305–Tyr332 are Cytoplasmic-facing. Cys318 carries the S-palmitoyl cysteine lipid modification.

Belongs to the G-protein coupled receptor 1 family. Homodimer; disulfide-linked, also forms higher order oligomers. Interacts with GNAS. Interacts with ATRNL1. Interacts with MGRN1; this interaction competes with GNAS-binding and thus inhibits agonist-induced cAMP production. Interacts with MRAP and MRAP2; these associated factors increase ligand-sensitivity and generation of cAMP.

The protein localises to the cell membrane. Functionally, hormone receptor that acts as a key component of the leptin-melanocortin pathway at the intersection of homeostatic maintenance of energetic state. Plays a role in regulating food intake: activation by a stimulating hormone such as anorexigenic alpha-melanocyte stimulating hormone (alpha-MSH) inhibits appetite, whereas binding to a natural antagonist like Agouti-related protein/AGRP promotes appetite. G-protein-coupled receptor that activates conventional Galphas signaling leading to induction of anorexogenic signaling in the hypothalamus to result in negative energy balance. Regulates the firing activity of neurons from the hypothalamus by alpha-MSH and AGRP independently of Galphas signaling by ligand-induced coupling of closure of inwardly rectifying potassium channel KCNJ13. In intestinal epithelial cells, plays a role in the inhibition of hepatic glucose production via nesfatin-1/NUCB2 leading to increased cyclic adenosine monophosphate (cAMP) levels and glucagon-like peptide 1 (GLP-1) secretion in the intestinal epithelium. The sequence is that of Melanocortin receptor 4 (MC4R) from Sus scrofa (Pig).